A 156-amino-acid chain; its full sequence is Aspartate carbamoyltransferase regulatory chain (156 aa).

Cys109, Cys114, Cys140, and Cys143 together coordinate Zn(2+).

It belongs to the PyrI family. In terms of assembly, contains catalytic and regulatory chains. It depends on Zn(2+) as a cofactor.

In terms of biological role, involved in allosteric regulation of aspartate carbamoyltransferase. In Methanosarcina barkeri (strain Fusaro / DSM 804), this protein is Aspartate carbamoyltransferase regulatory chain.